A 338-amino-acid chain; its full sequence is Ketol-acid reductoisomerase (NADP(+)) (338 aa).

A KARI N-terminal Rossmann domain is found at 1–181 (MNVYYDKDCD…GGGRSGIIET (181 aa)). NADP(+) contacts are provided by residues 24–27 (YGSQ), arginine 47, serine 50, serine 52, and 82–85 (DEFQ). The active site involves histidine 107. NADP(+) is bound at residue glycine 133. The KARI C-terminal knotted domain occupies 182-327 (TFKDETETDL…AKLRGMMPWI (146 aa)). Residues aspartate 190, glutamate 194, glutamate 226, and glutamate 230 each contribute to the Mg(2+) site. Serine 251 lines the substrate pocket.

It belongs to the ketol-acid reductoisomerase family. The cofactor is Mg(2+).

It carries out the reaction (2R)-2,3-dihydroxy-3-methylbutanoate + NADP(+) = (2S)-2-acetolactate + NADPH + H(+). The catalysed reaction is (2R,3R)-2,3-dihydroxy-3-methylpentanoate + NADP(+) = (S)-2-ethyl-2-hydroxy-3-oxobutanoate + NADPH + H(+). Its pathway is amino-acid biosynthesis; L-isoleucine biosynthesis; L-isoleucine from 2-oxobutanoate: step 2/4. It participates in amino-acid biosynthesis; L-valine biosynthesis; L-valine from pyruvate: step 2/4. Its function is as follows. Involved in the biosynthesis of branched-chain amino acids (BCAA). Catalyzes an alkyl-migration followed by a ketol-acid reduction of (S)-2-acetolactate (S2AL) to yield (R)-2,3-dihydroxy-isovalerate. In the isomerase reaction, S2AL is rearranged via a Mg-dependent methyl migration to produce 3-hydroxy-3-methyl-2-ketobutyrate (HMKB). In the reductase reaction, this 2-ketoacid undergoes a metal-dependent reduction by NADPH to yield (R)-2,3-dihydroxy-isovalerate. This Psychrobacter cryohalolentis (strain ATCC BAA-1226 / DSM 17306 / VKM B-2378 / K5) protein is Ketol-acid reductoisomerase (NADP(+)).